A 329-amino-acid chain; its full sequence is Glycerol-3-phosphate dehydrogenase [NAD(P)+] (329 aa).

Residues tryptophan 11 and lysine 101 each coordinate NADPH. Positions 101, 132, and 134 each coordinate sn-glycerol 3-phosphate. Alanine 136 contacts NADPH. Residues lysine 188, aspartate 241, serine 251, arginine 252, and asparagine 253 each coordinate sn-glycerol 3-phosphate. Lysine 188 (proton acceptor) is an active-site residue. Arginine 252 contributes to the NADPH binding site. Valine 276 and glutamate 278 together coordinate NADPH.

This sequence belongs to the NAD-dependent glycerol-3-phosphate dehydrogenase family.

The protein localises to the cytoplasm. The enzyme catalyses sn-glycerol 3-phosphate + NAD(+) = dihydroxyacetone phosphate + NADH + H(+). It catalyses the reaction sn-glycerol 3-phosphate + NADP(+) = dihydroxyacetone phosphate + NADPH + H(+). It participates in membrane lipid metabolism; glycerophospholipid metabolism. In terms of biological role, catalyzes the reduction of the glycolytic intermediate dihydroxyacetone phosphate (DHAP) to sn-glycerol 3-phosphate (G3P), the key precursor for phospholipid synthesis. This is Glycerol-3-phosphate dehydrogenase [NAD(P)+] from Phytoplasma australiense.